The chain runs to 427 residues: 3-phosphoshikimate 1-carboxyvinyltransferase (427 aa).

K22, S23, and R27 together coordinate 3-phosphoshikimate. K22 is a phosphoenolpyruvate binding site. Residues G96 and R124 each contribute to the phosphoenolpyruvate site. Residues S169, S170, Q171, S197, D313, N336, and K340 each contribute to the 3-phosphoshikimate site. Q171 lines the phosphoenolpyruvate pocket. D313 functions as the Proton acceptor in the catalytic mechanism. Phosphoenolpyruvate is bound by residues R344, R386, and K411.

It belongs to the EPSP synthase family. Monomer.

It is found in the cytoplasm. The enzyme catalyses 3-phosphoshikimate + phosphoenolpyruvate = 5-O-(1-carboxyvinyl)-3-phosphoshikimate + phosphate. It participates in metabolic intermediate biosynthesis; chorismate biosynthesis; chorismate from D-erythrose 4-phosphate and phosphoenolpyruvate: step 6/7. Its function is as follows. Catalyzes the transfer of the enolpyruvyl moiety of phosphoenolpyruvate (PEP) to the 5-hydroxyl of shikimate-3-phosphate (S3P) to produce enolpyruvyl shikimate-3-phosphate and inorganic phosphate. This Shigella flexneri serotype 5b (strain 8401) protein is 3-phosphoshikimate 1-carboxyvinyltransferase.